The primary structure comprises 186 residues: Inosine/xanthosine triphosphatase (186 aa).

Residue Gln75 coordinates Mg(2+).

This sequence belongs to the YjjX NTPase family. In terms of assembly, homodimer. The cofactor is Mg(2+). It depends on Mn(2+) as a cofactor.

The enzyme catalyses XTP + H2O = XDP + phosphate + H(+). It carries out the reaction ITP + H2O = IDP + phosphate + H(+). In terms of biological role, phosphatase that hydrolyzes non-canonical purine nucleotides such as XTP and ITP to their respective diphosphate derivatives. Probably excludes non-canonical purines from DNA/RNA precursor pool, thus preventing their incorporation into DNA/RNA and avoiding chromosomal lesions. The polypeptide is Inosine/xanthosine triphosphatase (Shewanella baltica (strain OS185)).